The sequence spans 495 residues: UDP-glycosyltransferase 73C5 (495 aa).

Residues 146–162 (ILFHGMGCFCLLCMHVL) traverse the membrane as a helical segment. UDP-alpha-D-glucose is bound by residues serine 296, 356-358 (SPQ), 373-381 (HCGWNSTLE), and 395-398 (FADQ). Residues 446 to 477 (MGESDDAKERRRRAKELGDSAHKAVEEGGSSH) are disordered. The span at 450–471 (DDAKERRRRAKELGDSAHKAVE) shows a compositional bias: basic and acidic residues.

The protein belongs to the UDP-glycosyltransferase family. As to expression, elongating hypocotyls and root-specific. Expressed in the vascular system, in meristematic tissues of the root tip, and in the vasculature of the hypocotyl right after germination. In late stage of flower development, expressed in petals, and in abscission zones.

It is found in the membrane. Specifically catalyzes 23-O-glucosylation of brassinosteroids, resulting probably in their inactivation. Also, involved in the O-glucosylation of trans-zeatin and dihydrozeatin. Active in vitro on cis-zeatin, dihydrozeatin-9-N-Glc, and olomoucine. Also involved in the detoxification of the Fusarium mycotoxin deoxynivalenol by the transfer of glucose from UDP-glucose to the hydroxyl group at C-3. Possesses low quercetin 7-O-glucosyltransferase and 4'-O-glucosyltransferase activities in vitro. In Arabidopsis thaliana (Mouse-ear cress), this protein is UDP-glycosyltransferase 73C5 (UGT73C5).